A 622-amino-acid chain; its full sequence is Condensin-2 complex subunit H2 (622 aa).

The residue at position 19 (threonine 19) is a Phosphothreonine. 4 positions are modified to phosphoserine: serine 95, serine 199, serine 223, and serine 227. The interval 207-354 (WNPKEPGRAE…PGQKRKRKGA (148 aa)) is disordered. Low complexity predominate over residues 262 to 273 (AAEPPEASAPEV). Serine 282 bears the Phosphoserine mark. Basic and acidic residues predominate over residues 294-312 (TLRERKEAPEPASRLKDTP).

Belongs to the CND2 H2 (condensin-2 subunit 2) family. Component of the condensin-2 complex, which contains the SMC2 and SMC4 heterodimer, and three non SMC subunits, NCAPG2, NCAPH2 and NCAPD3 that probably regulate the complex.

It is found in the nucleus. Functionally, regulatory subunit of the condensin-2 complex, a complex that seems to provide chromosomes with an additional level of organization and rigidity and in establishing mitotic chromosome architecture. May promote the resolution of double-strand DNA catenanes (intertwines) between sister chromatids. Condensin-mediated compaction likely increases tension in catenated sister chromatids, providing directionality for type II topoisomerase-mediated strand exchanges toward chromatid decatenation. Required for decatenation of chromatin bridges at anaphase. Early in neurogenesis, may play an essential role to ensure accurate mitotic chromosome condensation in neuron stem cells, ultimately affecting neuron pool and cortex size. Seems to have lineage-specific role in T-cell development. This chain is Condensin-2 complex subunit H2 (NCAPH2), found in Bos taurus (Bovine).